The primary structure comprises 300 residues: Cation-efflux pump FieF (300 aa).

Transmembrane regions (helical) follow at residues 11 to 31 (LAAV…VFAW), 40 to 60 (LASL…LLVV), 81 to 101 (LAAL…ILTG), and 114 to 134 (PEVG…LVSF). D45 and D49 together coordinate Zn(2+). Residues H153 and D157 each contribute to the Zn(2+) site. The next 2 helical transmembrane spans lie at 156 to 176 (SDLL…KGIT) and 182 to 202 (FALG…YDAV).

It belongs to the cation diffusion facilitator (CDF) transporter (TC 2.A.4) family. FieF subfamily. In terms of assembly, homodimer.

It is found in the cell inner membrane. It catalyses the reaction Zn(2+)(in) + H(+)(out) = Zn(2+)(out) + H(+)(in). The catalysed reaction is Cd(2+)(in) + H(+)(out) = Cd(2+)(out) + H(+)(in). The enzyme catalyses Fe(2+)(in) + H(+)(out) = Fe(2+)(out) + H(+)(in). In terms of biological role, divalent metal cation transporter which exports Zn(2+), Cd(2+) and possibly Fe(2+). May be involved in zinc and iron detoxification by efflux. The polypeptide is Cation-efflux pump FieF (Pectobacterium carotovorum subsp. carotovorum (strain PC1)).